The chain runs to 294 residues: Tyrosine recombinase XerC (294 aa).

The Core-binding (CB) domain occupies 1-85 (MSRLVEDFFA…ACRGFYTWLV (85 aa)). One can recognise a Tyr recombinase domain in the interval 106–283 (KLPRILDADE…DFQYLSKVYD (178 aa)). Residues Arg145, Lys169, His235, Arg238, and His261 contribute to the active site. The active-site O-(3'-phospho-DNA)-tyrosine intermediate is Tyr270.

Belongs to the 'phage' integrase family. XerC subfamily. In terms of assembly, forms a cyclic heterotetrameric complex composed of two molecules of XerC and two molecules of XerD.

The protein localises to the cytoplasm. Its function is as follows. Site-specific tyrosine recombinase, which acts by catalyzing the cutting and rejoining of the recombining DNA molecules. The XerC-XerD complex is essential to convert dimers of the bacterial chromosome into monomers to permit their segregation at cell division. It also contributes to the segregational stability of plasmids. The sequence is that of Tyrosine recombinase XerC from Xylella fastidiosa (strain M23).